A 337-amino-acid chain; its full sequence is Phenylalanine--tRNA ligase alpha subunit (337 aa).

Glutamate 252 lines the Mg(2+) pocket.

Belongs to the class-II aminoacyl-tRNA synthetase family. Phe-tRNA synthetase alpha subunit type 1 subfamily. In terms of assembly, tetramer of two alpha and two beta subunits. Requires Mg(2+) as cofactor.

The protein localises to the cytoplasm. The enzyme catalyses tRNA(Phe) + L-phenylalanine + ATP = L-phenylalanyl-tRNA(Phe) + AMP + diphosphate + H(+). The protein is Phenylalanine--tRNA ligase alpha subunit of Saccharophagus degradans (strain 2-40 / ATCC 43961 / DSM 17024).